Reading from the N-terminus, the 435-residue chain is Elongation factor 1-alpha (435 aa).

The region spanning 4-227 (KPHLNLIVIG…YLDQLELPPK (224 aa)) is the tr-type G domain. The tract at residues 13–20 (GHIDHGKS) is G1. A GTP-binding site is contributed by 13–20 (GHIDHGKS). Ser-20 provides a ligand contact to Mg(2+). The segment at 69-73 (GVTIN) is G2. The segment at 90-93 (DAPG) is G3. Residues 90–94 (DAPGH) and 152–155 (NKMD) each bind GTP. A G4 region spans residues 152–155 (NKMD). Residues 193 to 195 (VAP) form a G5 region.

It belongs to the TRAFAC class translation factor GTPase superfamily. Classic translation factor GTPase family. EF-Tu/EF-1A subfamily.

The protein resides in the cytoplasm. It catalyses the reaction GTP + H2O = GDP + phosphate + H(+). Its function is as follows. GTP hydrolase that promotes the GTP-dependent binding of aminoacyl-tRNA to the A-site of ribosomes during protein biosynthesis. This Saccharolobus solfataricus (strain ATCC 35092 / DSM 1617 / JCM 11322 / P2) (Sulfolobus solfataricus) protein is Elongation factor 1-alpha.